The following is a 511-amino-acid chain: Adenosine deaminase 2 (511 aa).

Residues 1 to 29 (MLVDGPSERPALCFLLLAVAMSFFGSALS) form the signal peptide. The interval 30 to 100 (IDETRAHLLL…HLIERSQVFN (71 aa)) is dimerization. Zn(2+) is bound by residues histidine 112 and histidine 114. Aspartate 115 is a binding site for substrate. Residue asparagine 127 is glycosylated (N-linked (GlcNAc...) asparagine). Positions 127 to 185 (NVTYRPHCHICFTPRGIMQFRFAHPTPRPSEKCSKWILLEDYRKRVQNVTEFDDSLLRN) are PRB domain. Cysteine 137 and cysteine 159 are joined by a disulfide. Residues asparagine 174 and asparagine 185 are each glycosylated (N-linked (GlcNAc...) asparagine). Substrate is bound by residues 204-211 (WSKFETIF), histidine 293, and glycine 326. Position 356 (histidine 356) interacts with Zn(2+). Residue glutamate 359 is the Proton donor of the active site. Residue asparagine 378 is glycosylated (N-linked (GlcNAc...) asparagine). Histidine 384 acts as the Proton acceptor in catalysis. Zn(2+) is bound at residue aspartate 441. Aspartate 442 serves as a coordination point for substrate.

It belongs to the metallo-dependent hydrolases superfamily. Adenosine and AMP deaminases family. ADGF subfamily. In terms of assembly, homodimer. Interacts with adenosine receptors. Binds heparin. Zn(2+) serves as cofactor. As to expression, detected in blood plasma (at protein level). Widely expressed, with most abundant expression in human adult heart, lung, lymphoblasts, and placenta as well as fetal lung, liver, and kidney. In embryo, expressed in the outflow tract and atrium of the developing heart, the VII/VIII cranial nerve ganglion, and the notochord.

It is found in the secreted. It carries out the reaction adenosine + H2O + H(+) = inosine + NH4(+). In terms of biological role, adenosine deaminase that may contribute to the degradation of extracellular adenosine, a signaling molecule that controls a variety of cellular responses. Requires elevated adenosine levels for optimal enzyme activity. Binds to cell surfaces via proteoglycans and may play a role in the regulation of cell proliferation and differentiation, independently of its enzyme activity. The sequence is that of Adenosine deaminase 2 from Homo sapiens (Human).